Reading from the N-terminus, the 290-residue chain is Fructose-1,6-bisphosphatase class 1 (290 aa).

Positions 78, 96, 98, and 99 each coordinate Mg(2+). Substrate contacts are provided by residues 99-102 (DGSS), Tyr201, and Lys226. Glu232 is a binding site for Mg(2+).

This sequence belongs to the FBPase class 1 family. In terms of assembly, homotetramer. The cofactor is Mg(2+).

Its subcellular location is the cytoplasm. It carries out the reaction beta-D-fructose 1,6-bisphosphate + H2O = beta-D-fructose 6-phosphate + phosphate. The protein operates within carbohydrate biosynthesis; gluconeogenesis. In Helicobacter pylori (strain Shi470), this protein is Fructose-1,6-bisphosphatase class 1.